A 375-amino-acid polypeptide reads, in one-letter code: MTQPAILVLEDGTVFEGESVGANGLSVGEVVFNTAMTGYQEVLTDPSYARQMVTLTYPHIGNTGFNDQDDEAKQVWAAGLIVRDVPRRPSSWRNQVALPAWLQTRGVVAISGIDTRKLTRLLREKGAQNGALMAGEIDVEKALEAARKFPGLKGMDLAKVVSTETTYQWQEGQLDLNANAFVQAELKFKVVAYDYGVKINILRMLAERGCDVTVVPARTPVAEVLAMQPDGVFLSNGPGDPEPCDYAISAIQELIAKKVPTFGICLGHQLLALAAGAKTVKMATGHHGANHPVQDLDGGRVMITSQNHGFAVDETTLPANVRVTHRSLFDGTNQGIALTDAPAFSFQGHPEASPGPRDVGPLFDRFVASMAEAKS.

The CPSase stretch occupies residues 1 to 185 (MTQPAILVLE…LNANAFVQAE (185 aa)). Positions 47, 237, and 239 each coordinate L-glutamine. Residues 189–375 (KVVAYDYGVK…FVASMAEAKS (187 aa)) form the Glutamine amidotransferase type-1 domain. Catalysis depends on Cys265, which acts as the Nucleophile. Residues Leu266, Gln269, Asn307, Gly309, and Phe310 each contribute to the L-glutamine site. Active-site residues include His349 and Glu351.

This sequence belongs to the CarA family. Composed of two chains; the small (or glutamine) chain promotes the hydrolysis of glutamine to ammonia, which is used by the large (or ammonia) chain to synthesize carbamoyl phosphate. Tetramer of heterodimers (alpha,beta)4.

The catalysed reaction is hydrogencarbonate + L-glutamine + 2 ATP + H2O = carbamoyl phosphate + L-glutamate + 2 ADP + phosphate + 2 H(+). It carries out the reaction L-glutamine + H2O = L-glutamate + NH4(+). Its pathway is amino-acid biosynthesis; L-arginine biosynthesis; carbamoyl phosphate from bicarbonate: step 1/1. It participates in pyrimidine metabolism; UMP biosynthesis via de novo pathway; (S)-dihydroorotate from bicarbonate: step 1/3. In terms of biological role, small subunit of the glutamine-dependent carbamoyl phosphate synthetase (CPSase). CPSase catalyzes the formation of carbamoyl phosphate from the ammonia moiety of glutamine, carbonate, and phosphate donated by ATP, constituting the first step of 2 biosynthetic pathways, one leading to arginine and/or urea and the other to pyrimidine nucleotides. The small subunit (glutamine amidotransferase) binds and cleaves glutamine to supply the large subunit with the substrate ammonia. The chain is Carbamoyl phosphate synthase small chain from Xanthomonas campestris pv. campestris (strain ATCC 33913 / DSM 3586 / NCPPB 528 / LMG 568 / P 25).